A 109-amino-acid polypeptide reads, in one-letter code: METKAILRGVRLSAQKGRLVADLVRGKSVDQALNILAFSPKKGAKIIRKVVESAIANAEHNDGADIDALKVKTIYVEEGTTLKRFTARAKGRGNRILKPTCHVFVTVGE.

Belongs to the universal ribosomal protein uL22 family. Part of the 50S ribosomal subunit.

This protein binds specifically to 23S rRNA; its binding is stimulated by other ribosomal proteins, e.g. L4, L17, and L20. It is important during the early stages of 50S assembly. It makes multiple contacts with different domains of the 23S rRNA in the assembled 50S subunit and ribosome. Its function is as follows. The globular domain of the protein is located near the polypeptide exit tunnel on the outside of the subunit, while an extended beta-hairpin is found that lines the wall of the exit tunnel in the center of the 70S ribosome. This Azoarcus sp. (strain BH72) protein is Large ribosomal subunit protein uL22.